The following is a 90-amino-acid chain: Acylphosphatase (90 aa).

The region spanning 3 to 88 (TWHMTAHGRV…GKFEDFDLRP (86 aa)) is the Acylphosphatase-like domain. Active-site residues include Arg-18 and Asn-36.

The protein belongs to the acylphosphatase family.

It carries out the reaction an acyl phosphate + H2O = a carboxylate + phosphate + H(+). The protein is Acylphosphatase (acyP) of Cupriavidus pinatubonensis (strain JMP 134 / LMG 1197) (Cupriavidus necator (strain JMP 134)).